Reading from the N-terminus, the 176-residue chain is Flavodoxin (176 aa).

One can recognise a Flavodoxin-like domain in the interval 4 to 165 (IGIFFGSDTG…RVEKWVKQVA (162 aa)).

It belongs to the flavodoxin family. FMN serves as cofactor.

Functionally, low-potential electron donor to a number of redox enzymes. This is Flavodoxin (fldA) from Klebsiella pneumoniae.